A 459-amino-acid chain; its full sequence is MDQSNRYARLDLKEADLIAGGRHVLCAYVMKPKAGYGYLETAAHFAAESSTGTNVEVSTTDDFTRGVDALVYEIDPEKEIMKIAYPVELFDRNIIDGRAMLCSFLTLTIGNNQGMGDVEYAKMHDFYVPPCYLRLFDGPSMNIADMWRVLGRDVRNGGMVVGTIIKPKLGLRPKPFADACHEFWLGGDFIKNDEPQGNQTFAPLKETIRLVADAMKRAQDETGEAKLFSANITADDHYEMVARGEYILETFGENADHVAFLVDGYVTGPAAITTARRQFPRQFLHYHRAGHGAVTSPQSMRGYTAFVLSKMARLQGASGIHTGTMGYGKMEGEAADKIMAYMLTDEAAEGPFYRQDWLGLKATTPIISGGMNALRLPGFFDNLGHSNVIQTSGGGAFGHLDGGTAGAKSLRQSHEAWMAGVDLVTYAREHRELARAFESFPADADKFYPGWRDRLQRAA.

Substrate is bound at residue N111. The Proton acceptor role is filled by K166. Position 168 (K168) interacts with substrate. Positions 191, 193, and 194 each coordinate Mg(2+). K191 is subject to N6-carboxylysine. H287 functions as the Proton acceptor in the catalytic mechanism. Residues R288, H321, and S368 each contribute to the substrate site.

The protein belongs to the RuBisCO large chain family. Type II subfamily. Homodimer. Mg(2+) is required as a cofactor.

It carries out the reaction 2 (2R)-3-phosphoglycerate + 2 H(+) = D-ribulose 1,5-bisphosphate + CO2 + H2O. The enzyme catalyses D-ribulose 1,5-bisphosphate + O2 = 2-phosphoglycolate + (2R)-3-phosphoglycerate + 2 H(+). Functionally, ruBisCO catalyzes two reactions: the carboxylation of D-ribulose 1,5-bisphosphate, the primary event in carbon dioxide fixation, as well as the oxidative fragmentation of the pentose substrate. Both reactions occur simultaneously and in competition at the same active site. In Cereibacter sphaeroides (strain ATCC 17029 / ATH 2.4.9) (Rhodobacter sphaeroides), this protein is Ribulose bisphosphate carboxylase.